The sequence spans 280 residues: MSGAVGLVVKRRSGIAEDVARLVVKELVESGVEVLVDETVDYPSLSGFPRFSISRDPPGRVVVVGGDGTLLRTFLRLGERESPLFMTIKAGKKGFLLDVERYEAVERLRDFLEGRFREVVYPRYRVYLEGEARACMFNDTAVTANNAKMARVHVFVDGDLAMNIDGDGVVVSTTAGSTAYSLSGGGPIIDPRLDVIVLTPLNPVQLFLRSIVVPSGSRVTVEASVYSNPLVVNIDGQYVYELEPGGIVDIERCGSGVRIARFRWWEDYYERLYTRLLAYW.

Catalysis depends on D67, which acts as the Proton acceptor. Residues 67–68 (DG), R72, 138–139 (ND), D167, A175, 178–183 (TAYSLS), and Q237 each bind NAD(+).

Belongs to the NAD kinase family. The cofactor is a divalent metal cation.

Its subcellular location is the cytoplasm. It catalyses the reaction NAD(+) + ATP = ADP + NADP(+) + H(+). Involved in the regulation of the intracellular balance of NAD and NADP, and is a key enzyme in the biosynthesis of NADP. Catalyzes specifically the phosphorylation on 2'-hydroxyl of the adenosine moiety of NAD to yield NADP. In Aeropyrum pernix (strain ATCC 700893 / DSM 11879 / JCM 9820 / NBRC 100138 / K1), this protein is NAD kinase.